The primary structure comprises 455 residues: MGCCLSKKPSPSLPSSVKPSDPIKPMEPVIEPLEEEAKPKSEKLNQEEEEEEVVVIKHTRSHEERSKKTESDKDSPVSSPVAAEKSNSTPLVRISSCTKEEVDAILIQCGKLSRSNSAAKTRRYSGSKRSFDFDQNERIRGGDAAEEDGMQRNRHRGVERVHGSPRERRRRTPSRERERSGSRERGNVGGGGGGSRRVSRSPAKRSEIRNADSCGSSVNSSNNRPGKFVTIPATDKSNNVEPLVKRITVKRNIGDACRIAASPRSKSPARAGNNVPSLSRSNSRKAEQSPYRRNPLGEIDQNTKKMIESVKPNSRTSRGPSPSRVAVVELTKAPQVVLSRSRSLRKSRDFDLVSNEDNNYTALLLKDIQSFHGKSVDDSVISLPLCVSKACSIVEAVADLNSMTNRTCLRSDSSRFRFTSTVKKADLMEPSFEKYVTVKRGGGSLEESSGSNNVT.

Low complexity predominate over residues 1 to 20; that stretch reads MGCCLSKKPSPSLPSSVKPS. Disordered regions lie at residues 1–234 and 258–304; these read MGCC…IPAT and RIAA…QNTK. Composition is skewed to basic and acidic residues over residues 35 to 46, 61 to 75, 129 to 143, 156 to 166, and 173 to 186; these read EEAKPKSEKLNQ, SHEERSKKTESDKDS, RSFDFDQNERIRGGD, RGVERVHGSPR, and PSRERERSGSRERG. The segment covering 213-224 has biased composition (polar residues); the sequence is SCGSSVNSSNNR. A compositionally biased stretch (low complexity) spans 260 to 271; the sequence is AASPRSKSPARA.

This is an uncharacterized protein from Arabidopsis thaliana (Mouse-ear cress).